A 72-amino-acid polypeptide reads, in one-letter code: Translation initiation factor IF-1 (72 aa).

The S1-like domain occupies 1-72 (MAKDDVIEVE…TRGRIVWRGK (72 aa)).

It belongs to the IF-1 family. As to quaternary structure, component of the 30S ribosomal translation pre-initiation complex which assembles on the 30S ribosome in the order IF-2 and IF-3, IF-1 and N-formylmethionyl-tRNA(fMet); mRNA recruitment can occur at any time during PIC assembly.

The protein resides in the cytoplasm. Functionally, one of the essential components for the initiation of protein synthesis. Stabilizes the binding of IF-2 and IF-3 on the 30S subunit to which N-formylmethionyl-tRNA(fMet) subsequently binds. Helps modulate mRNA selection, yielding the 30S pre-initiation complex (PIC). Upon addition of the 50S ribosomal subunit IF-1, IF-2 and IF-3 are released leaving the mature 70S translation initiation complex. This chain is Translation initiation factor IF-1, found in Caldanaerobacter subterraneus subsp. tengcongensis (strain DSM 15242 / JCM 11007 / NBRC 100824 / MB4) (Thermoanaerobacter tengcongensis).